The primary structure comprises 269 residues: Formamidopyrimidine-DNA glycosylase (269 aa).

Proline 2 acts as the Schiff-base intermediate with DNA in catalysis. Glutamate 3 (proton donor) is an active-site residue. The active-site Proton donor; for beta-elimination activity is the lysine 57. DNA is bound by residues histidine 90, arginine 109, and lysine 150. Residues 235–269 form an FPG-type zinc finger; it reads QVYGRKGEPCRVCGTPIVATKHAQRATFYCRQCQK. The Proton donor; for delta-elimination activity role is filled by arginine 259.

This sequence belongs to the FPG family. Monomer. It depends on Zn(2+) as a cofactor.

It catalyses the reaction Hydrolysis of DNA containing ring-opened 7-methylguanine residues, releasing 2,6-diamino-4-hydroxy-5-(N-methyl)formamidopyrimidine.. The enzyme catalyses 2'-deoxyribonucleotide-(2'-deoxyribose 5'-phosphate)-2'-deoxyribonucleotide-DNA = a 3'-end 2'-deoxyribonucleotide-(2,3-dehydro-2,3-deoxyribose 5'-phosphate)-DNA + a 5'-end 5'-phospho-2'-deoxyribonucleoside-DNA + H(+). Its function is as follows. Involved in base excision repair of DNA damaged by oxidation or by mutagenic agents. Acts as a DNA glycosylase that recognizes and removes damaged bases. Has a preference for oxidized purines, such as 7,8-dihydro-8-oxoguanine (8-oxoG). Has AP (apurinic/apyrimidinic) lyase activity and introduces nicks in the DNA strand. Cleaves the DNA backbone by beta-delta elimination to generate a single-strand break at the site of the removed base with both 3'- and 5'-phosphates. In Escherichia coli (strain 55989 / EAEC), this protein is Formamidopyrimidine-DNA glycosylase.